The primary structure comprises 447 residues: Succinate--CoA ligase [ADP-forming] subunit beta, mitochondrial (447 aa).

A mitochondrion-targeting transit peptide spans 1-34 (MFKLGRNRALASAFAATSRAPLASRLPSVSQQQR). Positions 45-287 (ADLLRQYGIG…TTQEDPDEVR (243 aa)) constitute an ATP-grasp domain. ATP-binding positions include K82, 89–91 (GRG), and E150. 2 residues coordinate Mg(2+): N242 and D256. Residues N307 and 364–366 (GIV) each bind substrate.

It belongs to the succinate/malate CoA ligase beta subunit family. In terms of assembly, heterodimer of an alpha and a beta subunit. Mg(2+) is required as a cofactor.

It is found in the mitochondrion. It carries out the reaction succinate + ATP + CoA = succinyl-CoA + ADP + phosphate. It participates in carbohydrate metabolism; tricarboxylic acid cycle; succinate from succinyl-CoA (ligase route): step 1/1. Functionally, succinyl-CoA synthetase functions in the citric acid cycle (TCA), coupling the hydrolysis of succinyl-CoA to the synthesis of ATP and thus represents the only step of substrate-level phosphorylation in the TCA. The beta subunit provides nucleotide specificity of the enzyme and binds the substrate succinate, while the binding sites for coenzyme A and phosphate are found in the alpha subunit. The chain is Succinate--CoA ligase [ADP-forming] subunit beta, mitochondrial from Neurospora crassa (strain ATCC 24698 / 74-OR23-1A / CBS 708.71 / DSM 1257 / FGSC 987).